The sequence spans 302 residues: MQVLRTPESRFAGLADWPFAPHYAEITDAGGARLRLHYVDEGPRDGAPVLLMHGEPSWAYLYRKIIPALAARGHRVIAPDLIGFGRSDKPAARGDYTYERHVAWMSAWLEGLDLRGLTLFCQDWGGLIGLRLVAAFPERFAGLVIANTGLPTGAGMTDGFKAWLDFSQNVPEMPIGLIVNMGTGRDLTPAEIAAYDAPFPDETYKEGARQFPMLVPVTPEHASVAENLAAWKVLEHFPGPVVTAFSDGDPVTRGGEAIFQSRMPGALGQPHRTLRGGHFLQEDCPDDIVDIVDAVARPESQS.

In terms of domain architecture, AB hydrolase-1 spans 48 to 150 (PVLLMHGEPS…AGLVIANTGL (103 aa)). Catalysis depends on Asp123, which acts as the Nucleophile. The active-site Proton donor is Asp249. His278 functions as the Proton acceptor in the catalytic mechanism.

It belongs to the haloalkane dehalogenase family. Type 1 subfamily. In terms of assembly, monomer.

It carries out the reaction 1-haloalkane + H2O = a halide anion + a primary alcohol + H(+). Functionally, catalyzes hydrolytic cleavage of carbon-halogen bonds in halogenated aliphatic compounds, leading to the formation of the corresponding primary alcohols, halide ions and protons. This chain is Haloalkane dehalogenase, found in Caulobacter sp. (strain K31).